The primary structure comprises 405 residues: Homocitrate synthase AksA (405 aa).

Residues Ile23–Thr274 enclose the Pyruvate carboxyltransferase domain.

Belongs to the alpha-IPM synthase/homocitrate synthase family.

It catalyses the reaction acetyl-CoA + 2-oxoglutarate + H2O = (2R)-homocitrate + CoA + H(+). It carries out the reaction 2-oxoadipate + acetyl-CoA + H2O = (R)-dihomocitrate + CoA + H(+). The catalysed reaction is 2-oxoheptanedioate + acetyl-CoA + H2O = (R)-trihomocitrate + CoA + H(+). Its pathway is organic acid metabolism; 2-oxosuberate biosynthesis. In terms of biological role, catalyzes the condensation of alpha-ketoglutarate and acetyl-CoA to form (R)-homocitrate. Can also catalyze the condensation of alpha-ketoadipate with acetyl-CoA to form (R)-homo(2)citrate, and the condensation of alpha-ketopimelate with acetyl-CoA to form (R)-homo(3)citrate. These reactions are part of the biosynthesis pathway of coenzyme B and biotin. This is Homocitrate synthase AksA (aksA) from Methanosarcina acetivorans (strain ATCC 35395 / DSM 2834 / JCM 12185 / C2A).